Here is a 223-residue protein sequence, read N- to C-terminus: ATP-dependent dethiobiotin synthetase BioD (223 aa).

Thr-16 serves as a coordination point for Mg(2+). Residue Lys-37 is part of the active site. Residue Ser-41 coordinates substrate. Mg(2+)-binding residues include Asp-50 and Glu-111. ATP is bound by residues Asp-50, 111–114 (EGAG), and 171–172 (NR).

It belongs to the dethiobiotin synthetase family. In terms of assembly, homodimer. Requires Mg(2+) as cofactor.

The protein localises to the cytoplasm. The catalysed reaction is (7R,8S)-7,8-diammoniononanoate + CO2 + ATP = (4R,5S)-dethiobiotin + ADP + phosphate + 3 H(+). It participates in cofactor biosynthesis; biotin biosynthesis; biotin from 7,8-diaminononanoate: step 1/2. Functionally, catalyzes a mechanistically unusual reaction, the ATP-dependent insertion of CO2 between the N7 and N8 nitrogen atoms of 7,8-diaminopelargonic acid (DAPA, also called 7,8-diammoniononanoate) to form a ureido ring. This is ATP-dependent dethiobiotin synthetase BioD from Anaeromyxobacter dehalogenans (strain 2CP-1 / ATCC BAA-258).